We begin with the raw amino-acid sequence, 261 residues long: MSDTEEQEYEEEQAEDEEAVEEEAPEEPEPVAEREEERPKPSRPVVPPLIPPKIPEGERVDFDDIHRKRMEKDLLELQTLIDVHFEQRKKEEEELIALKDRIERRRAERAEQQRFRTEKERERQAKLAEEKMRKEEEEAKKRAEDDAKKKKVLSNMGAHFGGYLVKAEQKRGKRQTGREMKLRILSERKKPLNIDYMGEDQLREKAQELSEWIHQLESEKFDLMEKLKQQKYEINVLYNRISHAQKFRKGAGKGRVGGRWK.

Residues 1–30 (MSDTEEQEYEEEQAEDEEAVEEEAPEEPEP) are compositionally biased toward acidic residues. 2 disordered regions span residues 1–61 (MSDT…ERVD) and 108–152 (ERAE…KKKV). Ser2 is subject to Phosphoserine; by CK2. A compositionally biased stretch (basic and acidic residues) spans 31–40 (VAEREEERPK). The segment covering 42–54 (SRPVVPPLIPPKI) has biased composition (pro residues). Positions 108–148 (ERAEQQRFRTEKERERQAKLAEEKMRKEEEEAKKRAEDDAK) are enriched in basic and acidic residues.

Belongs to the troponin T family. As to quaternary structure, interacts with TPM3. Expressed in soleus muscle. Isoform 4 is predominantly expressed in fast muscles.

In terms of biological role, troponin T is the tropomyosin-binding subunit of troponin, the thin filament regulatory complex which confers calcium-sensitivity to striated muscle actomyosin ATPase activity. This is Troponin T, slow skeletal muscle (Tnnt1) from Rattus norvegicus (Rat).